We begin with the raw amino-acid sequence, 424 residues long: Serine--tRNA ligase (424 aa).

233–235 is a binding site for L-serine; that stretch reads TAE. 264–266 provides a ligand contact to ATP; the sequence is RRE. Glu-287 serves as a coordination point for L-serine. 351–354 is an ATP binding site; that stretch reads EISS. Ser-387 is an L-serine binding site.

The protein belongs to the class-II aminoacyl-tRNA synthetase family. Type-1 seryl-tRNA synthetase subfamily. As to quaternary structure, homodimer. The tRNA molecule binds across the dimer.

It is found in the cytoplasm. It carries out the reaction tRNA(Ser) + L-serine + ATP = L-seryl-tRNA(Ser) + AMP + diphosphate + H(+). It catalyses the reaction tRNA(Sec) + L-serine + ATP = L-seryl-tRNA(Sec) + AMP + diphosphate + H(+). It functions in the pathway aminoacyl-tRNA biosynthesis; selenocysteinyl-tRNA(Sec) biosynthesis; L-seryl-tRNA(Sec) from L-serine and tRNA(Sec): step 1/1. Catalyzes the attachment of serine to tRNA(Ser). Is also able to aminoacylate tRNA(Sec) with serine, to form the misacylated tRNA L-seryl-tRNA(Sec), which will be further converted into selenocysteinyl-tRNA(Sec). The polypeptide is Serine--tRNA ligase (Acaryochloris marina (strain MBIC 11017)).